The primary structure comprises 267 residues: 4-hydroxy-tetrahydrodipicolinate reductase (267 aa).

NAD(+) is bound by residues 8–13 (GAAGRM) and Glu-34. Arg-35 lines the NADP(+) pocket. Residues 98 to 100 (GST) and 122 to 125 (APNM) each bind NAD(+). His-155 acts as the Proton donor/acceptor in catalysis. Residue His-156 coordinates (S)-2,3,4,5-tetrahydrodipicolinate. Residue Lys-159 is the Proton donor of the active site. Residue 165-166 (GT) participates in (S)-2,3,4,5-tetrahydrodipicolinate binding.

This sequence belongs to the DapB family.

It localises to the cytoplasm. It carries out the reaction (S)-2,3,4,5-tetrahydrodipicolinate + NAD(+) + H2O = (2S,4S)-4-hydroxy-2,3,4,5-tetrahydrodipicolinate + NADH + H(+). The enzyme catalyses (S)-2,3,4,5-tetrahydrodipicolinate + NADP(+) + H2O = (2S,4S)-4-hydroxy-2,3,4,5-tetrahydrodipicolinate + NADPH + H(+). It functions in the pathway amino-acid biosynthesis; L-lysine biosynthesis via DAP pathway; (S)-tetrahydrodipicolinate from L-aspartate: step 4/4. Functionally, catalyzes the conversion of 4-hydroxy-tetrahydrodipicolinate (HTPA) to tetrahydrodipicolinate. The chain is 4-hydroxy-tetrahydrodipicolinate reductase from Geobacter sp. (strain M21).